The sequence spans 118 residues: Large ribosomal subunit protein bL20 (118 aa).

This sequence belongs to the bacterial ribosomal protein bL20 family.

Binds directly to 23S ribosomal RNA and is necessary for the in vitro assembly process of the 50S ribosomal subunit. It is not involved in the protein synthesizing functions of that subunit. The polypeptide is Large ribosomal subunit protein bL20 (Lacticaseibacillus casei (strain BL23) (Lactobacillus casei)).